We begin with the raw amino-acid sequence, 412 residues long: Tryptophan synthase beta chain 1 (412 aa).

K103 bears the N6-(pyridoxal phosphate)lysine mark.

The protein belongs to the TrpB family. In terms of assembly, tetramer of two alpha and two beta chains. Pyridoxal 5'-phosphate is required as a cofactor.

It catalyses the reaction (1S,2R)-1-C-(indol-3-yl)glycerol 3-phosphate + L-serine = D-glyceraldehyde 3-phosphate + L-tryptophan + H2O. It participates in amino-acid biosynthesis; L-tryptophan biosynthesis; L-tryptophan from chorismate: step 5/5. In terms of biological role, the beta subunit is responsible for the synthesis of L-tryptophan from indole and L-serine. The chain is Tryptophan synthase beta chain 1 (trpB1) from Chlamydia caviae (strain ATCC VR-813 / DSM 19441 / 03DC25 / GPIC) (Chlamydophila caviae).